An 85-amino-acid chain; its full sequence is N.vectensis toxin 1 4 (85 aa).

A signal peptide spans 1 to 20 (MASFKIVIVCLALLVAVASA). Positions 21 to 36 (RRRDMMSDDELDYHYS) are excised as a propeptide. Intrachain disulfides connect cysteine 42–cysteine 82, cysteine 44–cysteine 72, and cysteine 65–cysteine 83.

The protein belongs to the sea anemone sodium channel inhibitory toxin family. Type II subfamily. In terms of tissue distribution, expressed in ectodermal glands and in clumps outside of the extodermal layer. Is not expressed in nematocytes. In adult female tissues, shows similar expression levels in mesenteries (gametes-producing tissue), tentacles, pharynx and physa.

It localises to the secreted. Its function is as follows. Binds to site 3 of voltage-gated sodium channels and inhibits the inactivation process. Is highly active on DmNav1/TipE (drosophila) and is only extremely weakly active on rat Nav1.4-beta-1/SCN4A-SCN1B, and on human Nav1.5-beta-1/SCN5A-beta-1. This reveals high specificity for arthropod over mammalian channels. In vivo, when released into the medium, this recombinant toxin induces impaired swimming, paralysis and death of the crustacean A.nauplii within several hours. Also causes paralysis of cherry shrimps immediately after injection at very low doses. Its effect on zebrafish (D.rerio) larvae is also rapid, since it induces tail twitching accompanied by impaired swimming after 20 minutes and complete paralysis within 45 minutes. It has also been observed to cause death of zebrafish larvae within 1 hour. The chain is N.vectensis toxin 1 4 from Nematostella vectensis (Starlet sea anemone).